A 162-amino-acid polypeptide reads, in one-letter code: Small ribosomal subunit protein uS13 (162 aa).

Residues 142-162 (RGQRTKSTGRRGSTVGVSRKK) are disordered.

Belongs to the universal ribosomal protein uS13 family. In terms of assembly, part of the 30S ribosomal subunit. Forms a loose heterodimer with protein S19. Forms two bridges to the 50S subunit in the 70S ribosome.

Its function is as follows. Located at the top of the head of the 30S subunit, it contacts several helices of the 16S rRNA. In the 70S ribosome it contacts the 23S rRNA (bridge B1a) and protein L5 of the 50S subunit (bridge B1b), connecting the 2 subunits; these bridges are implicated in subunit movement. This chain is Small ribosomal subunit protein uS13, found in Methanosarcina acetivorans (strain ATCC 35395 / DSM 2834 / JCM 12185 / C2A).